A 271-amino-acid polypeptide reads, in one-letter code: Thermoregulatory protein LcrF (271 aa).

One can recognise an HTH araC/xylS-type domain in the interval 167–265 (ERLQKFMEEN…GCTPSQARLT (99 aa)). 2 consecutive DNA-binding regions (H-T-H motif) follow at residues 184–205 (SKFA…GTVY) and 232–255 (IVDI…RRRF).

Its function is as follows. Transcriptional activator of the thermally regulated virulent yopE gene. LcrF activity could be modulated by the interaction with an inducer molecule serving as a temperature messenger. The availability of the messenger would in turn be controlled by a temperature-responsive process serving as a cellular thermometer. The polypeptide is Thermoregulatory protein LcrF (lcrF) (Yersinia pestis).